Consider the following 874-residue polypeptide: Alanine--tRNA ligase (874 aa).

The Zn(2+) site is built by His-561, His-565, Cys-663, and His-667.

It belongs to the class-II aminoacyl-tRNA synthetase family. Zn(2+) serves as cofactor.

Its subcellular location is the cytoplasm. It catalyses the reaction tRNA(Ala) + L-alanine + ATP = L-alanyl-tRNA(Ala) + AMP + diphosphate. Catalyzes the attachment of alanine to tRNA(Ala) in a two-step reaction: alanine is first activated by ATP to form Ala-AMP and then transferred to the acceptor end of tRNA(Ala). Also edits incorrectly charged Ser-tRNA(Ala) and Gly-tRNA(Ala) via its editing domain. This Trichodesmium erythraeum (strain IMS101) protein is Alanine--tRNA ligase.